Here is a 143-residue protein sequence, read N- to C-terminus: MESTLGSDLSRLVRVWRALIDQRLKPLELTQTHWVTLYNIHRLPPDQSQIQLAKAIGIEQPSLVRTLDQLEDKGLITRHICANDRRAKRIKLTDDAEPVIKEVTGVISLTRSEILDGISTDEIALLTNLVERLEQNIIHLQNK.

The HTH marR-type domain occupies 2–135 (ESTLGSDLSR…LTNLVERLEQ (134 aa)). Positions 49 to 72 (QIQLAKAIGIEQPSLVRTLDQLED) form a DNA-binding region, H-T-H motif.

This sequence belongs to the SlyA family. In terms of assembly, homodimer.

Functionally, transcription regulator that can specifically activate or repress expression of target genes. This Edwardsiella tarda protein is Transcriptional regulator SlyA.